The primary structure comprises 529 residues: hal-like protein DDB_G0273787/DDB_G0273081 (529 aa).

Positions 151-153 (ASG) form a cross-link, 5-imidazolinone (Ala-Gly). At Ser152 the chain carries 2,3-didehydroalanine (Ser).

It belongs to the PAL/histidase family. Contains an active site 4-methylidene-imidazol-5-one (MIO), which is formed autocatalytically by cyclization and dehydration of residues Ala-Ser-Gly.

It localises to the cytoplasm. The enzyme catalyses L-histidine = trans-urocanate + NH4(+). The protein operates within amino-acid degradation; L-histidine degradation into L-glutamate; N-formimidoyl-L-glutamate from L-histidine: step 1/3. The polypeptide is hal-like protein DDB_G0273787/DDB_G0273081 (Dictyostelium discoideum (Social amoeba)).